The sequence spans 184 residues: ATP synthase subunit delta (184 aa).

It belongs to the ATPase delta chain family. F-type ATPases have 2 components, F(1) - the catalytic core - and F(0) - the membrane proton channel. F(1) has five subunits: alpha(3), beta(3), gamma(1), delta(1), epsilon(1). F(0) has three main subunits: a(1), b(2) and c(10-14). The alpha and beta chains form an alternating ring which encloses part of the gamma chain. F(1) is attached to F(0) by a central stalk formed by the gamma and epsilon chains, while a peripheral stalk is formed by the delta and b chains.

It is found in the cell membrane. F(1)F(0) ATP synthase produces ATP from ADP in the presence of a proton or sodium gradient. F-type ATPases consist of two structural domains, F(1) containing the extramembraneous catalytic core and F(0) containing the membrane proton channel, linked together by a central stalk and a peripheral stalk. During catalysis, ATP synthesis in the catalytic domain of F(1) is coupled via a rotary mechanism of the central stalk subunits to proton translocation. Its function is as follows. This protein is part of the stalk that links CF(0) to CF(1). It either transmits conformational changes from CF(0) to CF(1) or is implicated in proton conduction. This chain is ATP synthase subunit delta, found in Amoebophilus asiaticus (strain 5a2).